The primary structure comprises 160 residues: SsrA-binding protein (160 aa).

The disordered stretch occupies residues 131–160; it reads KKEYDKRHTERERDSDRELQRAVRSKGKDD.

It belongs to the SmpB family.

It localises to the cytoplasm. In terms of biological role, required for rescue of stalled ribosomes mediated by trans-translation. Binds to transfer-messenger RNA (tmRNA), required for stable association of tmRNA with ribosomes. tmRNA and SmpB together mimic tRNA shape, replacing the anticodon stem-loop with SmpB. tmRNA is encoded by the ssrA gene; the 2 termini fold to resemble tRNA(Ala) and it encodes a 'tag peptide', a short internal open reading frame. During trans-translation Ala-aminoacylated tmRNA acts like a tRNA, entering the A-site of stalled ribosomes, displacing the stalled mRNA. The ribosome then switches to translate the ORF on the tmRNA; the nascent peptide is terminated with the 'tag peptide' encoded by the tmRNA and targeted for degradation. The ribosome is freed to recommence translation, which seems to be the essential function of trans-translation. This chain is SsrA-binding protein, found in Pseudomonas syringae pv. syringae (strain B728a).